A 175-amino-acid polypeptide reads, in one-letter code: Development-specific protein S homolog (175 aa).

Beta/gamma crystallin 'Greek key' domains lie at 2–46 (ANIT…KVPP) and 48–86 (VKAI…KVMS). Residues 87–90 (VPVQ) are connecting peptide. Beta/gamma crystallin 'Greek key' domains lie at 91–135 (PRAR…KPEG) and 136–175 (LKVV…RITP).

The protein belongs to the beta/gamma-crystallin family.

The protein localises to the spore. It localises to the perispore. The polypeptide is Development-specific protein S homolog (ops) (Myxococcus xanthus).